The primary structure comprises 225 residues: Cardiotrophin-like cytokine factor 1 (225 aa).

The N-terminal stretch at 1–27 is a signal peptide; that stretch reads MDLRAGDSWGMLACLCTVLWHLPAVPA. A glycan (N-linked (GlcNAc...) asparagine) is linked at Asn29.

The protein belongs to the IL-6 superfamily. As to quaternary structure, forms a heteromeric complex with cardiotrophin-like cytokine CRLF1/CLF-1; the CRLF1-CLCF1 complex is a ligand for the ciliary neurotrophic factor receptor/CNTFR. The CRLF1-CLCF1 heterodimer binds SORL1 (via N-terminal ectodomain); within this complex, the interaction is mediated predominantly by the CRLF1 moiety. The tripartite signaling complex formed by CRLF1, CLCF1 and CNTFR also binds SORL1. In terms of tissue distribution, expressed predominantly in lymph nodes, spleen, peripheral blood lymphocytes, bone marrow, and fetal liver.

It localises to the secreted. In complex with CRLF1, forms a heterodimeric neurotropic cytokine that plays a crucial role during neuronal development. Also stimulates B-cells. Binds to and activates the ILST/gp130 receptor. In Homo sapiens (Human), this protein is Cardiotrophin-like cytokine factor 1 (CLCF1).